The primary structure comprises 419 residues: Serine hydroxymethyltransferase (419 aa).

Residues L121 and G125–L127 each bind (6S)-5,6,7,8-tetrahydrofolate. The residue at position 229 (K229) is an N6-(pyridoxal phosphate)lysine. Residue S354–F356 participates in (6S)-5,6,7,8-tetrahydrofolate binding.

Belongs to the SHMT family. Homodimer. Pyridoxal 5'-phosphate is required as a cofactor.

The protein resides in the cytoplasm. The enzyme catalyses (6R)-5,10-methylene-5,6,7,8-tetrahydrofolate + glycine + H2O = (6S)-5,6,7,8-tetrahydrofolate + L-serine. It participates in one-carbon metabolism; tetrahydrofolate interconversion. The protein operates within amino-acid biosynthesis; glycine biosynthesis; glycine from L-serine: step 1/1. Its function is as follows. Catalyzes the reversible interconversion of serine and glycine with tetrahydrofolate (THF) serving as the one-carbon carrier. This reaction serves as the major source of one-carbon groups required for the biosynthesis of purines, thymidylate, methionine, and other important biomolecules. Also exhibits THF-independent aldolase activity toward beta-hydroxyamino acids, producing glycine and aldehydes, via a retro-aldol mechanism. This Coxiella burnetii (strain CbuK_Q154) (Coxiella burnetii (strain Q154)) protein is Serine hydroxymethyltransferase.